Reading from the N-terminus, the 235-residue chain is Phosphoribosylaminoimidazole-succinocarboxamide synthase (235 aa).

It belongs to the SAICAR synthetase family.

The enzyme catalyses 5-amino-1-(5-phospho-D-ribosyl)imidazole-4-carboxylate + L-aspartate + ATP = (2S)-2-[5-amino-1-(5-phospho-beta-D-ribosyl)imidazole-4-carboxamido]succinate + ADP + phosphate + 2 H(+). It participates in purine metabolism; IMP biosynthesis via de novo pathway; 5-amino-1-(5-phospho-D-ribosyl)imidazole-4-carboxamide from 5-amino-1-(5-phospho-D-ribosyl)imidazole-4-carboxylate: step 1/2. The chain is Phosphoribosylaminoimidazole-succinocarboxamide synthase from Streptococcus thermophilus (strain CNRZ 1066).